The sequence spans 144 residues: Toxin MT0934 (144 aa).

Toxic component of a type II toxin-antitoxin (TA) system. Its toxic effect is neutralized by coexpression with cognate antitoxin MT0933. The protein is Toxin MT0934 of Mycobacterium tuberculosis (strain CDC 1551 / Oshkosh).